The sequence spans 345 residues: Neurotrimin (345 aa).

An N-terminal signal peptide occupies residues 1–30 (MGVCGSLFLPWKCLVVVSLRLLFLVPTGVP). Ig-like C2-type domains are found at residues 39 to 126 (PKAM…PKTS), 136 to 218 (PKIV…VKVT), and 222 to 309 (PPYI…ASIT). N-linked (GlcNAc...) asparagine glycosylation is found at N44, N70, and N152. A disulfide bond links C57 and C115. Disulfide bonds link C157/C201 and C243/C295. Residues N284, N292, N305, and N321 are each glycosylated (N-linked (GlcNAc...) asparagine). N321 carries GPI-anchor amidated asparagine lipidation. The propeptide at 322 to 345 (GTSSRRAGCLWLLPLLVLHLLLKF) is removed in mature form.

It belongs to the immunoglobulin superfamily. IgLON family.

It localises to the cell membrane. Neural cell adhesion molecule. The sequence is that of Neurotrimin (NTM) from Bos taurus (Bovine).